The chain runs to 151 residues: Ribosome maturation factor RimP (151 aa).

The protein belongs to the RimP family.

It is found in the cytoplasm. Functionally, required for maturation of 30S ribosomal subunits. This chain is Ribosome maturation factor RimP, found in Halorhodospira halophila (strain DSM 244 / SL1) (Ectothiorhodospira halophila (strain DSM 244 / SL1)).